A 392-amino-acid chain; its full sequence is Nicotinate phosphoribosyltransferase (392 aa).

His214 carries the post-translational modification Phosphohistidine; by autocatalysis.

It belongs to the NAPRTase family. Post-translationally, transiently phosphorylated on a His residue during the reaction cycle. Phosphorylation strongly increases the affinity for substrates and increases the rate of nicotinate D-ribonucleotide production. Dephosphorylation regenerates the low-affinity form of the enzyme, leading to product release.

The enzyme catalyses nicotinate + 5-phospho-alpha-D-ribose 1-diphosphate + ATP + H2O = nicotinate beta-D-ribonucleotide + ADP + phosphate + diphosphate. Its pathway is cofactor biosynthesis; NAD(+) biosynthesis; nicotinate D-ribonucleotide from nicotinate: step 1/1. Its function is as follows. Catalyzes the synthesis of beta-nicotinate D-ribonucleotide from nicotinate and 5-phospho-D-ribose 1-phosphate at the expense of ATP. The protein is Nicotinate phosphoribosyltransferase of Xanthomonas axonopodis pv. citri (strain 306).